The sequence spans 61 residues: Fasciculin-2 (61 aa).

Disulfide bonds link cysteine 3-cysteine 22, cysteine 17-cysteine 39, cysteine 41-cysteine 52, and cysteine 53-cysteine 59.

The protein belongs to the three-finger toxin family. Short-chain subfamily. Acn-esterase inhibitor sub-subfamily. As to expression, expressed by the venom gland.

It localises to the secreted. Functionally, interferes with neuromuscular transmission by inhibiting the enzyme acetylcholinesterase (AChE) present at the neuromuscular junction. It selectively binds and inhibits with a 1:1 stoichiometry the mammalian and electric fish AChE at picomolar concentrations. It is highly specific for the peripheral site of AChE and blocks the entry of acetylcholine into the active site of the enzyme (through the Met-33 residue), thereby preventing its breakdown. It has been called fasciculin since after injection into mice it causes severe, generalized and long-lasting (5-7 hours) fasciculations. The chain is Fasciculin-2 from Dendroaspis angusticeps (Eastern green mamba).